The chain runs to 471 residues: D-hydantoinase (471 aa).

The Zn(2+) site is built by histidine 58, histidine 60, and lysine 150. Residue lysine 150 is modified to N6-carboxylysine. Substrate is bound at residue tyrosine 155. Histidine 183 and histidine 239 together coordinate Zn(2+). Serine 288 provides a ligand contact to substrate. Zn(2+) is bound at residue aspartate 315. Residue asparagine 337 participates in substrate binding.

Belongs to the metallo-dependent hydrolases superfamily. Hydantoinase/dihydropyrimidinase family. As to quaternary structure, homotetramer. The cofactor is Zn(2+). Ni(2+) is required as a cofactor. Co(2+) serves as cofactor. It depends on Mn(2+) as a cofactor. Carboxylation allows a single lysine to coordinate two zinc ions.

With respect to regulation, completely inhibited by p-chloromercuribenzoate and partially inhibited by metal chelating agents. Its function is as follows. Catalyzes the stereospecific hydrolysis of the cyclic amide bond of D-hydantoin. Has no activity on dihydropyrimidines. The polypeptide is D-hydantoinase (Geobacillus stearothermophilus (Bacillus stearothermophilus)).